A 383-amino-acid polypeptide reads, in one-letter code: Seipin (383 aa).

Residues 1-27 (MVNDPPVPALLWAQEVGHVLAGRARRL) are Cytoplasmic-facing. Residues 28–48 (MLQFGVLFCTILLLLWVSVFL) traverse the membrane as a helical segment. Topologically, residues 49–242 (YGSFYYSYMP…TCAFVGVASN (194 aa)) are lumenal. Asn-88 and Asn-242 each carry an N-linked (GlcNAc...) asparagine glycan. Residues 243 to 263 (FTFLSVIVLFSYMQWVWGAVW) form a helical membrane-spanning segment. Over 264–383 (PRHRFSLQVN…LRQRPTCSSS (120 aa)) the chain is Cytoplasmic. The tract at residues 279 to 383 (NSHHGAPRRI…LRQRPTCSSS (105 aa)) is disordered. Ser-289 carries the phosphoserine modification. The span at 292–302 (QPGQESTQQSD) shows a compositional bias: polar residues. Over residues 322 to 332 (EEEKPEKRPLN) the composition is skewed to basic and acidic residues. Residues Ser-342 and Ser-345 each carry the phosphoserine modification. The segment covering 353 to 371 (TEANPPTSASASALAPETL) has biased composition (low complexity).

This sequence belongs to the seipin family. In terms of assembly, undecamer (an oligomer having eleven subunits). Oligomerization is important for its function in lipid droplet formation. Interacts with LDAF1 to form an oligomeric complex. Interacts with RAB18. Interacts with ZFYVE1 in a RAB18-dependent manner. Expressed in the paraventricular nucleus of the hypothalamus (PVN) and brainstem dorsal vagal complex (DVC) in oxytocin and catecholaminergic neurons (at protein level). Highest expression detected in subcutaneous and epididymal white adipose tissue, brown adipose tissue and testis. Also expressed in brain, skeletal muscle and adrenal gland, with lower levels detected in liver, heart, kidney, spleen, lung and small intestine. In brain, detected in piriform cortex, olfactory tubercle, islands of Calleja, lateral septal nucleus, medial septal nucleus, nucleus of the vertical limb of the diagonal band, nucleus of the horizontal limb of the diagonal band, preoptic area, paraventricular thalamic nucleus, lateral globus pallidus, supraoptic nucleus, suprachiasmatic nucleus, subfornical organ, paraventricular nucleus of the hypothalamus, zona incerta, dorsomedial nucleus of the hypothalamus, ventromedial nucleus of the hypothalamus, arcuate nucleus of the hypothalamus, basomedial amygdaloid nucleus, medial amygdaloid nucleus, medial habenular, pyramidal cell layer of the hippocampus, granular layer of the dentate gyrus, posterior hypothalamus, supramammilliary nucleus, premammillary nucleus, nucleus of Darkschewitsch, Edinger-Westphal nucleus, ventral tegmental area, dorsal raphe nucleus, periaqueductal gray, median raphe nucleus, lateral parabrachial nucleus, dorsal tegmental nucleus, laterodorsal tegmental nucleus, locus coeruleus, Barrington's nucleus, medial vestibular nucleus, ambiguous nucleus, dorsal vagal complex and hypoglossal nucleus.

It is found in the endoplasmic reticulum membrane. Its subcellular location is the lipid droplet. Plays a crucial role in the formation of lipid droplets (LDs) which are storage organelles at the center of lipid and energy homeostasis. In association with LDAF1, defines the sites of LD formation in the ER. Also required for growth and maturation of small nascent LDs into larger mature LDs. Mediates the formation and/or stabilization of endoplasmic reticulum-lipid droplets (ER-LD) contacts, facilitating protein and lipid delivery from the ER into growing LDs. Regulates the maturation of ZFYVE1-positive nascent LDs and the function of the RAB18-ZFYVE1 complex in mediating the formation of ER-LD contacts. Binds anionic phospholipids including phosphatidic acid. Plays an important role in the differentiation and development of adipocytes. The sequence is that of Seipin from Mus musculus (Mouse).